A 126-amino-acid polypeptide reads, in one-letter code: Fumarate reductase subunit C (126 aa).

Transmembrane regions (helical) follow at residues 30–50 (IFVA…GAGG), 64–84 (VVVV…VTWF), and 105–125 (VLAG…WMVL).

It belongs to the FrdC family. In terms of assembly, part of an enzyme complex containing four subunits: a flavoprotein (FrdA), an iron-sulfur protein (FrdB), and two hydrophobic anchor proteins (FrdC and FrdD).

It is found in the cell membrane. In terms of biological role, anchors the catalytic components of the fumarate reductase complex to the cell membrane, binds quinones. This Mycobacterium tuberculosis (strain ATCC 25177 / H37Ra) protein is Fumarate reductase subunit C.